A 173-amino-acid polypeptide reads, in one-letter code: Ribosome maturation factor RimM (173 aa).

The 79-residue stretch at 95–173 folds into the PRC barrel domain; it reads EGEYYWRQLE…LMVVDWDPDF (79 aa).

This sequence belongs to the RimM family. In terms of assembly, binds ribosomal protein uS19.

It localises to the cytoplasm. Its function is as follows. An accessory protein needed during the final step in the assembly of 30S ribosomal subunit, possibly for assembly of the head region. Essential for efficient processing of 16S rRNA. May be needed both before and after RbfA during the maturation of 16S rRNA. It has affinity for free ribosomal 30S subunits but not for 70S ribosomes. The protein is Ribosome maturation factor RimM of Hahella chejuensis (strain KCTC 2396).